We begin with the raw amino-acid sequence, 754 residues long: uncharacterized protein (754 aa).

Catalysis depends on charge relay system residues Ser585 and His707. Residues 733–754 form a disordered region; sequence SHAPPPSRKARSAARRSTDPVR.

It belongs to the peptidase S9A family.

This is an uncharacterized protein from Sinorhizobium fredii (strain NBRC 101917 / NGR234).